Consider the following 445-residue polypeptide: Phosphoglucosamine mutase (445 aa).

Catalysis depends on S102, which acts as the Phosphoserine intermediate. Residues S102, D241, D243, and D245 each contribute to the Mg(2+) site. A Phosphoserine modification is found at S102.

This sequence belongs to the phosphohexose mutase family. It depends on Mg(2+) as a cofactor. In terms of processing, activated by phosphorylation.

It catalyses the reaction alpha-D-glucosamine 1-phosphate = D-glucosamine 6-phosphate. In terms of biological role, catalyzes the conversion of glucosamine-6-phosphate to glucosamine-1-phosphate. The protein is Phosphoglucosamine mutase of Acinetobacter baumannii (strain SDF).